Here is a 203-residue protein sequence, read N- to C-terminus: Ribosomal RNA large subunit methyltransferase E (203 aa).

5 residues coordinate S-adenosyl-L-methionine: glycine 51, tryptophan 53, aspartate 69, aspartate 85, and aspartate 108. Residue lysine 148 is the Proton acceptor of the active site.

It belongs to the class I-like SAM-binding methyltransferase superfamily. RNA methyltransferase RlmE family.

The protein localises to the cytoplasm. The catalysed reaction is uridine(2552) in 23S rRNA + S-adenosyl-L-methionine = 2'-O-methyluridine(2552) in 23S rRNA + S-adenosyl-L-homocysteine + H(+). In terms of biological role, specifically methylates the uridine in position 2552 of 23S rRNA at the 2'-O position of the ribose in the fully assembled 50S ribosomal subunit. This chain is Ribosomal RNA large subunit methyltransferase E, found in Methanocorpusculum labreanum (strain ATCC 43576 / DSM 4855 / Z).